The following is a 504-amino-acid chain: Prenylcysteine oxidase 1 (504 aa).

The first 28 residues, 1-28 (MGRFAATLVGSLFGLGLLLCGLGRLASA), serve as a signal peptide directing secretion. Residues Asn-196, Asn-322, and Asn-352 are each glycosylated (N-linked (GlcNAc...) asparagine).

This sequence belongs to the prenylcysteine oxidase family. It depends on FAD as a cofactor. In terms of tissue distribution, expressed mainly in cerebrum.

Its subcellular location is the lysosome. It catalyses the reaction an S-polyprenyl-L-cysteine + O2 + H2O = a polyprenal + L-cysteine + H2O2. It carries out the reaction S-(2E,6E)-farnesyl-L-cysteine + O2 + H2O = (2E,6E)-farnesal + L-cysteine + H2O2. The catalysed reaction is [(2E,6E,10E)-geranylgeranyl]-L-cysteine + O2 + H2O = (2E,6E,10E)-geranylgeranial + L-cysteine + H2O2. Its function is as follows. Prenylcysteine oxidase that cleaves the thioether bond of prenyl-L-cysteines, such as farnesylcysteine and geranylgeranylcysteine. Only active against free prenylcysteines and not prenylcysteine residues within prenylated proteins or peptides. Involved in the final step in the degradation of prenylated proteins, by degrading prenylcysteines after the protein has been degraded. This chain is Prenylcysteine oxidase 1, found in Rattus norvegicus (Rat).